A 170-amino-acid chain; its full sequence is Acireductone dioxygenase (170 aa).

4 residues coordinate Fe(2+): histidine 99, histidine 101, glutamate 105, and histidine 144. The Ni(2+) site is built by histidine 99, histidine 101, glutamate 105, and histidine 144.

It belongs to the acireductone dioxygenase (ARD) family. As to quaternary structure, monomer. Fe(2+) serves as cofactor. Ni(2+) is required as a cofactor.

It carries out the reaction 1,2-dihydroxy-5-(methylsulfanyl)pent-1-en-3-one + O2 = 3-(methylsulfanyl)propanoate + CO + formate + 2 H(+). The enzyme catalyses 1,2-dihydroxy-5-(methylsulfanyl)pent-1-en-3-one + O2 = 4-methylsulfanyl-2-oxobutanoate + formate + 2 H(+). The protein operates within amino-acid biosynthesis; L-methionine biosynthesis via salvage pathway; L-methionine from S-methyl-5-thio-alpha-D-ribose 1-phosphate: step 5/6. Its function is as follows. Catalyzes 2 different reactions between oxygen and the acireductone 1,2-dihydroxy-3-keto-5-methylthiopentene (DHK-MTPene) depending upon the metal bound in the active site. Fe-containing acireductone dioxygenase (Fe-ARD) produces formate and 2-keto-4-methylthiobutyrate (KMTB), the alpha-ketoacid precursor of methionine in the methionine recycle pathway. Ni-containing acireductone dioxygenase (Ni-ARD) produces methylthiopropionate, carbon monoxide and formate, and does not lie on the methionine recycle pathway. This is Acireductone dioxygenase from Bacillus cereus (strain ATCC 14579 / DSM 31 / CCUG 7414 / JCM 2152 / NBRC 15305 / NCIMB 9373 / NCTC 2599 / NRRL B-3711).